The sequence spans 294 residues: ATP phosphoribosyltransferase (294 aa).

This sequence belongs to the ATP phosphoribosyltransferase family. Long subfamily. Mg(2+) is required as a cofactor.

It is found in the cytoplasm. The catalysed reaction is 1-(5-phospho-beta-D-ribosyl)-ATP + diphosphate = 5-phospho-alpha-D-ribose 1-diphosphate + ATP. It participates in amino-acid biosynthesis; L-histidine biosynthesis; L-histidine from 5-phospho-alpha-D-ribose 1-diphosphate: step 1/9. Feedback inhibited by histidine. Its function is as follows. Catalyzes the condensation of ATP and 5-phosphoribose 1-diphosphate to form N'-(5'-phosphoribosyl)-ATP (PR-ATP). Has a crucial role in the pathway because the rate of histidine biosynthesis seems to be controlled primarily by regulation of HisG enzymatic activity. The chain is ATP phosphoribosyltransferase from Chlorobium chlorochromatii (strain CaD3).